A 200-amino-acid chain; its full sequence is Small ribosomal subunit protein uS4 (200 aa).

Positions Thr22–Arg41 are disordered. The region spanning Thr92–Gly152 is the S4 RNA-binding domain.

It belongs to the universal ribosomal protein uS4 family. Part of the 30S ribosomal subunit. Contacts protein S5. The interaction surface between S4 and S5 is involved in control of translational fidelity.

One of the primary rRNA binding proteins, it binds directly to 16S rRNA where it nucleates assembly of the body of the 30S subunit. Functionally, with S5 and S12 plays an important role in translational accuracy. The sequence is that of Small ribosomal subunit protein uS4 from Lysinibacillus sphaericus (strain C3-41).